The sequence spans 382 residues: Ribosomal RNA large subunit methyltransferase G (382 aa).

Belongs to the methyltransferase superfamily. RlmG family.

It is found in the cytoplasm. It catalyses the reaction guanosine(1835) in 23S rRNA + S-adenosyl-L-methionine = N(2)-methylguanosine(1835) in 23S rRNA + S-adenosyl-L-homocysteine + H(+). In terms of biological role, specifically methylates the guanine in position 1835 (m2G1835) of 23S rRNA. The protein is Ribosomal RNA large subunit methyltransferase G of Psychromonas ingrahamii (strain DSM 17664 / CCUG 51855 / 37).